The chain runs to 130 residues: MKKFAAVIAVMALCSAPVMAAEQGGFSGPSATQSQAGGFQGPNGSVTTVESAKSLRDDTWVTLRGNIVERISDDLYVFKDASGTINVDIDHKRWNGVTVTPKDTVEIQGEVDKDWNSVEIDVKQIRKVNP.

The first 20 residues, Met1–Ala20, serve as a signal peptide directing secretion. A disordered region spans residues Gly25 to Gly44. The span at Pro29–Gly44 shows a compositional bias: polar residues.

It to H.influenzae HI_1709.

The protein resides in the periplasm. The protein is Protein YgiW (ygiW) of Escherichia coli O157:H7.